The chain runs to 4924 residues: Hydroxamate-type ferrichrome siderophore peptide synthetase (4924 aa).

4 Carrier domains span residues 715 to 791 (NQSE…ILLK), 2172 to 2246 (DGFQ…KRRR), 3254 to 3328 (NVVE…NTQT), and 4402 to 4478 (IHLN…QYEK). An O-(pantetheine 4'-phosphoryl)serine mark is found at S752, S2206, S3288, and S4439.

Belongs to the ATP-dependent AMP-binding enzyme family.

The protein localises to the cytoplasm. In terms of biological role, involved in intracellular and extracellular ferrichrome siderophore biosynthesis. The chain is Hydroxamate-type ferrichrome siderophore peptide synthetase (sib1) from Schizosaccharomyces pombe (strain 972 / ATCC 24843) (Fission yeast).